The sequence spans 241 residues: Pyridoxine 5'-phosphate synthase (241 aa).

3-amino-2-oxopropyl phosphate is bound at residue N7. Position 9-10 (9-10) interacts with 1-deoxy-D-xylulose 5-phosphate; the sequence is DH. A 3-amino-2-oxopropyl phosphate-binding site is contributed by R18. H43 acts as the Proton acceptor in catalysis. The 1-deoxy-D-xylulose 5-phosphate site is built by R45 and H50. Residue E70 is the Proton acceptor of the active site. Position 100 (T100) interacts with 1-deoxy-D-xylulose 5-phosphate. The Proton donor role is filled by H191. 3-amino-2-oxopropyl phosphate contacts are provided by residues S192 and 213–214; that span reads GH.

It belongs to the PNP synthase family. As to quaternary structure, homooctamer; tetramer of dimers.

It localises to the cytoplasm. It carries out the reaction 3-amino-2-oxopropyl phosphate + 1-deoxy-D-xylulose 5-phosphate = pyridoxine 5'-phosphate + phosphate + 2 H2O + H(+). It participates in cofactor biosynthesis; pyridoxine 5'-phosphate biosynthesis; pyridoxine 5'-phosphate from D-erythrose 4-phosphate: step 5/5. In terms of biological role, catalyzes the complicated ring closure reaction between the two acyclic compounds 1-deoxy-D-xylulose-5-phosphate (DXP) and 3-amino-2-oxopropyl phosphate (1-amino-acetone-3-phosphate or AAP) to form pyridoxine 5'-phosphate (PNP) and inorganic phosphate. The polypeptide is Pyridoxine 5'-phosphate synthase (Nitrosomonas eutropha (strain DSM 101675 / C91 / Nm57)).